Here is a 1223-residue protein sequence, read N- to C-terminus: Glycerophosphocholine phosphodiesterase GDE1 (1223 aa).

An SPX domain is found at 1–213 (MKFGKTFANH…GTNQQMSTMK (213 aa)). Over residues 43–59 (HNKNSYDEGRPPTKMRD) the composition is skewed to basic and acidic residues. Residues 43-64 (HNKNSYDEGRPPTKMRDSSNSA) are disordered. ANK repeat units lie at residues 427–456 (YKRT…EWNI), 472–502 (ESLT…NVKL), 504–533 (SSSL…DINY), 538–567 (LHET…DLEI), 572–601 (FGWT…NFDI), and 605–634 (GGWT…LVTH). Phosphoserine is present on Ser653. The region spanning 872–1217 (TRVIGHRGLG…DSVLAIRRGL (346 aa)) is the GP-PDE domain. A divalent metal cation contacts are provided by Glu911, Asp913, and His926. A Phosphoserine modification is found at Ser983.

The protein belongs to the GDE1 family. It depends on a divalent metal cation as a cofactor.

Its subcellular location is the cytoplasm. It catalyses the reaction sn-glycerol 3-phosphocholine + H2O = sn-glycerol 3-phosphate + choline + H(+). The catalysed reaction is sn-glycero-3-phospho-1D-myo-inositol + H2O = myo-inositol + sn-glycerol 3-phosphate + H(+). In terms of biological role, glycerophosphocholine glycerophosphodiesterase responsible for the hydrolysis of intracellular glycerophosphocholine into glycerol-phosphate and choline. The choline is used for phosphatidyl-choline synthesis. Required for utilization of glycerophosphocholine as phosphate source. May also use glycerophosphoinositol as substrate in vivo. This is Glycerophosphocholine phosphodiesterase GDE1 from Saccharomyces cerevisiae (strain ATCC 204508 / S288c) (Baker's yeast).